Here is a 438-residue protein sequence, read N- to C-terminus: Minor myo-inositol transporter IolF (438 aa).

The next 12 membrane-spanning stretches (helical) occupy residues isoleucine 15 to leucine 35, isoleucine 49 to glycine 69, methionine 86 to leucine 106, glycine 108 to alanine 128, tryptophan 147 to leucine 167, isoleucine 171 to proline 191, isoleucine 230 to phenylalanine 250, leucine 268 to phenylalanine 288, threonine 295 to leucine 312, glycine 317 to alanine 334, leucine 359 to isoleucine 379, and methionine 387 to proline 407.

Belongs to the major facilitator superfamily. Sugar transporter (TC 2.A.1.1) family.

It is found in the cell membrane. It functions in the pathway polyol metabolism; myo-inositol degradation into acetyl-CoA. Minor myo-inositol uptake transporter. This chain is Minor myo-inositol transporter IolF (iolF), found in Bacillus subtilis (strain 168).